Reading from the N-terminus, the 433-residue chain is Zinc carboxypeptidase A 1 (433 aa).

An N-terminal signal peptide occupies residues 1–28; the sequence is MVRLNSAAGSRWWAPAMAILAVALSVEA. The 294-residue stretch at 130 to 423 folds into the Peptidase M14 domain; it reads DYHTLEEIHA…DSLITLLEES (294 aa). Zn(2+) is bound by residues His-187 and Glu-190. An intrachain disulfide couples Cys-253 to Cys-276. His-312 provides a ligand contact to Zn(2+). The Proton donor/acceptor role is filled by Glu-387.

Belongs to the peptidase M14 family. Requires Zn(2+) as cofactor. Expressed in the posterior midgut in pupae and female adults.

The protein localises to the secreted. Its function is as follows. Involved in the digestion of the blood meal. This chain is Zinc carboxypeptidase A 1, found in Anopheles gambiae (African malaria mosquito).